Here is a 725-residue protein sequence, read N- to C-terminus: Methionine--tRNA ligase (725 aa).

Positions 27-37 (PYANGQIHIGH) match the 'HIGH' region motif. Zn(2+)-binding residues include cysteine 158, cysteine 161, cysteine 171, and cysteine 174. Residues 348 to 352 (KMSKS) carry the 'KMSKS' region motif. Lysine 351 lines the ATP pocket. The tRNA-binding domain maps to 619–725 (DFAKIDLRIA…SGAKPGMRVK (107 aa)).

It belongs to the class-I aminoacyl-tRNA synthetase family. MetG type 1 subfamily. As to quaternary structure, homodimer. Zn(2+) is required as a cofactor.

The protein resides in the cytoplasm. It catalyses the reaction tRNA(Met) + L-methionine + ATP = L-methionyl-tRNA(Met) + AMP + diphosphate. Its function is as follows. Is required not only for elongation of protein synthesis but also for the initiation of all mRNA translation through initiator tRNA(fMet) aminoacylation. The protein is Methionine--tRNA ligase of Burkholderia pseudomallei (strain 1710b).